The chain runs to 170 residues: Cytochrome c-type biogenesis protein CcmE (170 aa).

Residues 1-7 (MTRKQRR) lie on the Cytoplasmic side of the membrane. A helical; Signal-anchor for type II membrane protein transmembrane segment spans residues 8–28 (LTIIGGALFVLAVAAGLVLNA). The Periplasmic portion of the chain corresponds to 29 to 170 (LRDSIVFFST…GEKTAAGATQ (142 aa)). Heme is bound by residues histidine 122 and tyrosine 126. Basic and acidic residues predominate over residues 137-146 (KQGHWKDDYG). Positions 137–170 (KQGHWKDDYGKPQAAKPGPVSMREGEKTAAGATQ) are disordered.

It belongs to the CcmE/CycJ family.

The protein resides in the cell inner membrane. In terms of biological role, heme chaperone required for the biogenesis of c-type cytochromes. Transiently binds heme delivered by CcmC and transfers the heme to apo-cytochromes in a process facilitated by CcmF and CcmH. This Bradyrhizobium sp. (strain BTAi1 / ATCC BAA-1182) protein is Cytochrome c-type biogenesis protein CcmE.